Reading from the N-terminus, the 264-residue chain is ELL-associated factor 2 (264 aa).

Disordered stretches follow at residues 114–154 (EGSS…PSSP) and 169–264 (MDQL…DSDD). Positions 117-142 (SKVQSRIEQQQQQIRNSSKTPNNIKN) are enriched in polar residues. Positions 173–196 (SSSDSSSDSKSSSSSSSSSENSSS) are enriched in low complexity. A compositionally biased stretch (basic and acidic residues) spans 228–238 (VPDKDASHNRS). Residues 239–264 (QENSGHMMNTLRSDLQLSESGSDSDD) show a composition bias toward polar residues.

This sequence belongs to the EAF family.

It localises to the nucleus speckle. In terms of biological role, may act as a transcriptional transactivator. This chain is ELL-associated factor 2 (EAF2), found in Gallus gallus (Chicken).